A 28-amino-acid chain; its full sequence is APAPSGGGSAPLAKIYPRGSHWAVGHLM.

Met28 bears the Methionine amide mark.

This sequence belongs to the bombesin/neuromedin-B/ranatensin family.

The protein localises to the secreted. Its subcellular location is the cytoplasmic vesicle. It is found in the secretory vesicle lumen. Its function is as follows. Stimulates the release of gastrin and other gastrointestinal hormones. The polypeptide is Gastrin-releasing peptide (GRP) (Alligator mississippiensis (American alligator)).